The following is a 272-amino-acid chain: ATP synthase subunit a (272 aa).

The next 5 helical transmembrane spans lie at 41 to 61, 101 to 121, 147 to 167, 221 to 241, and 243 to 263; these read VLNIDSMFFSVVLGLVFLVLF, VIAPLALTIFVWVFLMNFMDL, DVNITLSMALGVFVLILFYSI, LIFILIAGLLPWWSQWILSVP, and AIFHILIISLQAFIFMVLTIV.

This sequence belongs to the ATPase A chain family. In terms of assembly, F-type ATPases have 2 components, CF(1) - the catalytic core - and CF(0) - the membrane proton channel. CF(1) has five subunits: alpha(3), beta(3), gamma(1), delta(1), epsilon(1). CF(0) has three main subunits: a(1), b(2) and c(9-12). The alpha and beta chains form an alternating ring which encloses part of the gamma chain. CF(1) is attached to CF(0) by a central stalk formed by the gamma and epsilon chains, while a peripheral stalk is formed by the delta and b chains.

The protein localises to the cell inner membrane. In terms of biological role, key component of the proton channel; it plays a direct role in the translocation of protons across the membrane. This chain is ATP synthase subunit a, found in Erwinia tasmaniensis (strain DSM 17950 / CFBP 7177 / CIP 109463 / NCPPB 4357 / Et1/99).